A 76-amino-acid chain; its full sequence is Acyl carrier protein (76 aa).

The Carrier domain occupies 1–76; the sequence is MATFDDVKDV…AAIDYIESKQ (76 aa). S36 bears the O-(pantetheine 4'-phosphoryl)serine mark.

This sequence belongs to the acyl carrier protein (ACP) family. In terms of processing, 4'-phosphopantetheine is transferred from CoA to a specific serine of apo-ACP by AcpS. This modification is essential for activity because fatty acids are bound in thioester linkage to the sulfhydryl of the prosthetic group.

It is found in the cytoplasm. It functions in the pathway lipid metabolism; fatty acid biosynthesis. Carrier of the growing fatty acid chain in fatty acid biosynthesis. The polypeptide is Acyl carrier protein (Deinococcus deserti (strain DSM 17065 / CIP 109153 / LMG 22923 / VCD115)).